A 224-amino-acid chain; its full sequence is LexA repressor (224 aa).

The H-T-H motif DNA-binding region spans 38-58 (IREIGDAVGLTSTSSVAHQLR). Residues 71–82 (NRPRAVDVRGID) show a composition bias toward basic and acidic residues. A disordered region spans residues 71–96 (NRPRAVDVRGIDDAGTPSATTDVIGS). Catalysis depends on for autocatalytic cleavage activity residues Ser-148 and Lys-185.

It belongs to the peptidase S24 family. Homodimer.

The catalysed reaction is Hydrolysis of Ala-|-Gly bond in repressor LexA.. In terms of biological role, represses a number of genes involved in the response to DNA damage (SOS response), including recA and lexA. In the presence of single-stranded DNA, RecA interacts with LexA causing an autocatalytic cleavage which disrupts the DNA-binding part of LexA, leading to derepression of the SOS regulon and eventually DNA repair. The sequence is that of LexA repressor from Mycobacteroides abscessus (strain ATCC 19977 / DSM 44196 / CCUG 20993 / CIP 104536 / JCM 13569 / NCTC 13031 / TMC 1543 / L948) (Mycobacterium abscessus).